The chain runs to 115 residues: Large ribosomal subunit protein bL20 (115 aa).

It belongs to the bacterial ribosomal protein bL20 family.

Functionally, binds directly to 23S ribosomal RNA and is necessary for the in vitro assembly process of the 50S ribosomal subunit. It is not involved in the protein synthesizing functions of that subunit. The sequence is that of Large ribosomal subunit protein bL20 from Prochlorococcus marinus (strain AS9601).